The sequence spans 407 residues: L-cysteine:1D-myo-inositol 2-amino-2-deoxy-alpha-D-glucopyranoside ligase (407 aa).

A disordered region spans residues 1 to 22 (MRSWSAPDIVPLPGTGGPLRVH). Cys43 provides a ligand contact to Zn(2+). L-cysteinyl-5'-AMP is bound by residues 43 to 46 (CGIT), Thr58, and 81 to 83 (NTT). Positions 45–55 (ITPYDAAHLGH) match the 'HIGH' region motif. The 'ERGGDP' region signature appears at 183 to 188 (ERGGDP). Trp223 is a binding site for L-cysteinyl-5'-AMP. Cys227 contributes to the Zn(2+) binding site. 245-247 (GSD) is an L-cysteinyl-5'-AMP binding site. Residue His252 participates in Zn(2+) binding. L-cysteinyl-5'-AMP is bound at residue Val278. Residues 284 to 288 (KMSKS) carry the 'KMSKS' region motif.

It belongs to the class-I aminoacyl-tRNA synthetase family. MshC subfamily. In terms of assembly, monomer. Zn(2+) is required as a cofactor.

It carries out the reaction 1D-myo-inositol 2-amino-2-deoxy-alpha-D-glucopyranoside + L-cysteine + ATP = 1D-myo-inositol 2-(L-cysteinylamino)-2-deoxy-alpha-D-glucopyranoside + AMP + diphosphate + H(+). In terms of biological role, catalyzes the ATP-dependent condensation of GlcN-Ins and L-cysteine to form L-Cys-GlcN-Ins. The chain is L-cysteine:1D-myo-inositol 2-amino-2-deoxy-alpha-D-glucopyranoside ligase from Nocardiopsis dassonvillei (strain ATCC 23218 / DSM 43111 / CIP 107115 / JCM 7437 / KCTC 9190 / NBRC 14626 / NCTC 10488 / NRRL B-5397 / IMRU 509) (Actinomadura dassonvillei).